A 48-amino-acid chain; its full sequence is Small, acid-soluble spore protein G (48 aa).

Positions 1 to 16 (MSENRHENEENRRDAA) are enriched in basic and acidic residues. Residues 1–48 (MSENRHENEENRRDAAVAKVQNSGNAKVVVSVNTDQDQAQAQSQDGED) form a disordered region. Low complexity predominate over residues 35–48 (DQDQAQAQSQDGED).

This is Small, acid-soluble spore protein G (sspG) from Bacillus subtilis (strain 168).